The chain runs to 600 residues: Sulfite reductase [NADPH] flavoprotein alpha-component (600 aa).

The Flavodoxin-like domain occupies 63-201; sequence ITLISASQTG…AAQAWRQRVV (139 aa). FMN-binding positions include 69–74, 116–119, and 152–161; these read SQTGNA, STQG, and LGDTSYEHFC. Residues 235-449 enclose the FAD-binding FR-type domain; the sequence is ESPLTATLSV…IEHNDNFRLP (215 aa). FAD is bound by residues Thr-323, Ala-357, 387-390, 405-407, and 420-423; these read RLYS, TVG, and GGAS. NADP(+) is bound by residues 520–521, 526–530, and Asp-562; these read SR and KIYVQ. Tyr-600 is an FAD binding site.

The protein belongs to the NADPH-dependent sulphite reductase flavoprotein subunit CysJ family. In the N-terminal section; belongs to the flavodoxin family. It in the C-terminal section; belongs to the flavoprotein pyridine nucleotide cytochrome reductase family. Alpha(8)-beta(8). The alpha component is a flavoprotein, the beta component is a hemoprotein. FAD is required as a cofactor. FMN serves as cofactor.

It catalyses the reaction hydrogen sulfide + 3 NADP(+) + 3 H2O = sulfite + 3 NADPH + 4 H(+). It participates in sulfur metabolism; hydrogen sulfide biosynthesis; hydrogen sulfide from sulfite (NADPH route): step 1/1. Functionally, component of the sulfite reductase complex that catalyzes the 6-electron reduction of sulfite to sulfide. This is one of several activities required for the biosynthesis of L-cysteine from sulfate. The flavoprotein component catalyzes the electron flow from NADPH -&gt; FAD -&gt; FMN to the hemoprotein component. This Cronobacter sakazakii (strain ATCC BAA-894) (Enterobacter sakazakii) protein is Sulfite reductase [NADPH] flavoprotein alpha-component.